The following is a 342-amino-acid chain: Dihydroorotate dehydrogenase (quinone) (342 aa).

Residues 61–65 (AGLDK) and Thr-85 contribute to the FMN site. Lys-65 provides a ligand contact to substrate. Substrate is bound at residue 110–114 (NRMGF). Positions 138 and 171 each coordinate FMN. A substrate-binding site is contributed by Asn-171. Residue Ser-174 is the Nucleophile of the active site. Asn-176 contributes to the substrate binding site. FMN-binding residues include Lys-216 and Thr-244. Position 245–246 (245–246 (NT)) interacts with substrate. Residues Gly-267, Gly-296, and 317–318 (YS) each bind FMN.

It belongs to the dihydroorotate dehydrogenase family. Type 2 subfamily. In terms of assembly, monomer. The cofactor is FMN.

The protein localises to the cell membrane. The enzyme catalyses (S)-dihydroorotate + a quinone = orotate + a quinol. It functions in the pathway pyrimidine metabolism; UMP biosynthesis via de novo pathway; orotate from (S)-dihydroorotate (quinone route): step 1/1. Its function is as follows. Catalyzes the conversion of dihydroorotate to orotate with quinone as electron acceptor. This is Dihydroorotate dehydrogenase (quinone) from Pseudomonas aeruginosa (strain UCBPP-PA14).